Consider the following 193-residue polypeptide: Large ribosomal subunit protein uL18 (193 aa).

Belongs to the universal ribosomal protein uL18 family. Part of the 50S ribosomal subunit. Contacts the 5S and 23S rRNAs.

This is one of the proteins that bind and probably mediate the attachment of the 5S RNA into the large ribosomal subunit, where it forms part of the central protuberance. This is Large ribosomal subunit protein uL18 from Methanococcus maripaludis (strain C5 / ATCC BAA-1333).